A 108-amino-acid polypeptide reads, in one-letter code: U-scoloptoxin(16)-Er10a (108 aa).

The N-terminal stretch at 1 to 24 is a signal peptide; that stretch reads MASFTSFCVLFTFCLLLLAHQARS.

The protein belongs to the scoloptoxin-16 family. Contains 4 disulfide bonds. As to expression, expressed by the venom gland.

Its subcellular location is the secreted. The chain is U-scoloptoxin(16)-Er10a from Ethmostigmus rubripes (Giant centipede).